Reading from the N-terminus, the 622-residue chain is Polymerase acidic protein (622 aa).

It belongs to the influenza viruses PA family. RNA polymerase is composed of three subunits: PA, PB1 and PB2.

The protein localises to the virion. Its subcellular location is the host nucleus. In terms of biological role, subunit of the RNA-dependent RNA polymerase which is responsible for replication and transcription of virus RNA segments. The transcription of viral mRNAs occurs by a unique mechanism called cap-snatching. 5' methylated caps of cellular mRNAs are cleaved after 10-13 nucleotides by PA. In turn, these short capped RNAs are used as primers by PB1 for transcription of viral mRNAs. During virus replication, PB1 initiates RNA synthesis and copy vRNA into complementary RNA (cRNA) which in turn serves as a template for the production of more vRNAs. This is Polymerase acidic protein from Thogoto virus (isolate SiAr 126) (Tho).